The primary structure comprises 1328 residues: Mitogen-activated protein kinase kinase kinase 19 (1328 aa).

The span at 1–19 shows a compositional bias: basic and acidic residues; sequence MSSMPKPERHAESLLDICH. 4 disordered regions span residues 1–28, 44–74, 344–380, and 524–561; these read MSSMPKPERHAESLLDICHDTNSSPTDL, RSEEFDQDGDCSHSTLVNEEEDPSGGRQDWQ, VREEDIDCHGSKTRKPEEENSQYLSSRKNESSVAKNY, and QENDKHKMNSHRSKLDSKTKTSKKTPQNFVISTEGPIK. Positions 344-361 are enriched in basic and acidic residues; it reads VREEDIDCHGSKTRKPEE. Residues 364 to 377 show a composition bias toward polar residues; sequence SQYLSSRKNESSVA. Residues 524–542 show a composition bias toward basic and acidic residues; the sequence is QENDKHKMNSHRSKLDSKT. One can recognise a Protein kinase domain in the interval 1061–1324; the sequence is WTKGEILGKG…ALQLLKHSFL (264 aa). ATP-binding positions include 1067-1075 and Lys-1089; that span reads LGKGAYGTV. The Proton acceptor role is filled by Asp-1186.

The protein belongs to the protein kinase superfamily. STE Ser/Thr protein kinase family. STE20 subfamily.

It catalyses the reaction L-seryl-[protein] + ATP = O-phospho-L-seryl-[protein] + ADP + H(+). The enzyme catalyses L-threonyl-[protein] + ATP = O-phospho-L-threonyl-[protein] + ADP + H(+). This chain is Mitogen-activated protein kinase kinase kinase 19 (MAP3K19), found in Homo sapiens (Human).